The chain runs to 525 residues: Ribosomal protein uS12 methylthiotransferase RimO (525 aa).

The span at 1-20 shows a compositional bias: polar residues; that stretch reads MPKISTESVNTTIAPSQPAS. A disordered region spans residues 1-44; that stretch reads MPKISTESVNTTIAPSQPASTAPKDTATLFNPAKPTATPAQSSI. Residues 82–192 form the MTTase N-terminal domain; it reads PKIGFVSLGC…VIRAVALHVP (111 aa). The [4Fe-4S] cluster site is built by C91, C127, C156, C230, C234, and C237. A Radical SAM core domain is found at 216-453; it reads LTPSHYAYLK…MTLQQDISAQ (238 aa). The TRAM domain occupies 456–525; sequence QEKIGKTLMV…EYDLFASYQA (70 aa).

Belongs to the methylthiotransferase family. RimO subfamily. [4Fe-4S] cluster serves as cofactor.

The protein localises to the cytoplasm. It catalyses the reaction L-aspartate(89)-[ribosomal protein uS12]-hydrogen + (sulfur carrier)-SH + AH2 + 2 S-adenosyl-L-methionine = 3-methylsulfanyl-L-aspartate(89)-[ribosomal protein uS12]-hydrogen + (sulfur carrier)-H + 5'-deoxyadenosine + L-methionine + A + S-adenosyl-L-homocysteine + 2 H(+). In terms of biological role, catalyzes the methylthiolation of an aspartic acid residue of ribosomal protein uS12. In Psychrobacter arcticus (strain DSM 17307 / VKM B-2377 / 273-4), this protein is Ribosomal protein uS12 methylthiotransferase RimO.